The primary structure comprises 100 residues: Apolipoprotein C-II (100 aa).

Residues 1–22 (MDSRFLLALFLVLLVLGCEVQA) form the signal peptide. Positions 66 to 74 (SVDEKLRDM) are lipid binding. Positions 78-100 (SSAAMTTYAIIFTDQILTLLKGE) are lipoprotein lipase cofactor.

This sequence belongs to the apolipoprotein C2 family. Proapolipoprotein C-II is synthesized as a sialic acid containing glycoprotein which is subsequently desialylated prior to its proteolytic processing. In terms of processing, proapolipoprotein C-II, the major form found in plasma undergoes proteolytic cleavage of its N-terminal hexapeptide to generate the mature form apolipoprotein C-II, which occurs as the minor form in plasma.

The protein resides in the secreted. Component of chylomicrons, very low-density lipoproteins (VLDL), low-density lipoproteins (LDL), and high-density lipoproteins (HDL) in plasma. Plays an important role in lipoprotein metabolism as an activator of lipoprotein lipase. This chain is Apolipoprotein C-II (APOC2), found in Myodes glareolus (Bank vole).